The sequence spans 109 residues: Thiosulfate sulfurtransferase GlpE (109 aa).

Positions 16 to 104 constitute a Rhodanese domain; that stretch reads RSNGAVVVDI…WRATFPSETA (89 aa). The active-site Cysteine persulfide intermediate is C64.

The protein belongs to the GlpE family.

It is found in the cytoplasm. It catalyses the reaction thiosulfate + hydrogen cyanide = thiocyanate + sulfite + 2 H(+). The enzyme catalyses thiosulfate + [thioredoxin]-dithiol = [thioredoxin]-disulfide + hydrogen sulfide + sulfite + 2 H(+). In terms of biological role, transferase that catalyzes the transfer of sulfur from thiosulfate to thiophilic acceptors such as cyanide or dithiols. May function in a CysM-independent thiosulfate assimilation pathway by catalyzing the conversion of thiosulfate to sulfite, which can then be used for L-cysteine biosynthesis. The sequence is that of Thiosulfate sulfurtransferase GlpE from Ectopseudomonas mendocina (strain ymp) (Pseudomonas mendocina).